The primary structure comprises 171 residues: Large ribosomal subunit protein uL10 (171 aa).

The protein belongs to the universal ribosomal protein uL10 family. In terms of assembly, part of the ribosomal stalk of the 50S ribosomal subunit. The N-terminus interacts with L11 and the large rRNA to form the base of the stalk. The C-terminus forms an elongated spine to which L12 dimers bind in a sequential fashion forming a multimeric L10(L12)X complex.

In terms of biological role, forms part of the ribosomal stalk, playing a central role in the interaction of the ribosome with GTP-bound translation factors. The chain is Large ribosomal subunit protein uL10 from Corynebacterium efficiens (strain DSM 44549 / YS-314 / AJ 12310 / JCM 11189 / NBRC 100395).